A 460-amino-acid polypeptide reads, in one-letter code: UDP-N-acetylmuramate--L-alanine ligase (460 aa).

Glycine 118–threonine 124 is a binding site for ATP.

The protein belongs to the MurCDEF family.

The protein localises to the cytoplasm. It carries out the reaction UDP-N-acetyl-alpha-D-muramate + L-alanine + ATP = UDP-N-acetyl-alpha-D-muramoyl-L-alanine + ADP + phosphate + H(+). It participates in cell wall biogenesis; peptidoglycan biosynthesis. Its function is as follows. Cell wall formation. This chain is UDP-N-acetylmuramate--L-alanine ligase, found in Gloeobacter violaceus (strain ATCC 29082 / PCC 7421).